The sequence spans 480 residues: Type II methyltransferase M.NspV (480 aa).

This sequence belongs to the methyltransferase superfamily.

Functionally, a gamma subtype methylase that recognizes the double-stranded sequence 5'-TTCGAA-3', and methylates it on an unknown base to protect it against the NspV endonuclease. The chain is Type II methyltransferase M.NspV from Nostoc sp. (strain ATCC 29411 / PCC 7524).